We begin with the raw amino-acid sequence, 92 residues long: cAMP-dependent protein kinase inhibitor beta (92 aa).

The tract at residues M1 to E26 is disordered. Positions P7–E26 are enriched in polar residues. Phosphoserine is present on S56. Residues E70 to G82 are compositionally biased toward basic and acidic residues. The disordered stretch occupies residues E70 to K92.

This sequence belongs to the PKI family.

Extremely potent competitive inhibitor of cAMP-dependent protein kinase activity, this protein interacts with the catalytic subunit of the enzyme after the cAMP-induced dissociation of its regulatory chains. The polypeptide is cAMP-dependent protein kinase inhibitor beta (Pkib) (Mus musculus (Mouse)).